Reading from the N-terminus, the 96-residue chain is Iron-sulfur cluster assembly protein CyaY (96 aa).

The protein belongs to the frataxin family.

Functionally, involved in iron-sulfur (Fe-S) cluster assembly. May act as a regulator of Fe-S biogenesis. The polypeptide is Iron-sulfur cluster assembly protein CyaY (Rickettsia bellii (strain RML369-C)).